A 456-amino-acid polypeptide reads, in one-letter code: Serine/threonine-protein kinase meng-po (456 aa).

The disordered stretch occupies residues Arg15–Lys78. The span at Ser22–Thr55 shows a compositional bias: low complexity. The Protein kinase domain occupies Tyr101 to Val367. Residues Leu107–Ile115 and Lys130 contribute to the ATP site. The active-site Proton acceptor is the Asp221. Ser334 is subject to Phosphoserine; by PKA.

Belongs to the protein kinase superfamily. Ser/Thr protein kinase family. Mg(2+) is required as a cofactor. In terms of tissue distribution, expressed in the mushroom bodies (at protein level).

The catalysed reaction is L-seryl-[protein] + ATP = O-phospho-L-seryl-[protein] + ADP + H(+). It catalyses the reaction L-threonyl-[protein] + ATP = O-phospho-L-threonyl-[protein] + ADP + H(+). Activated by Pka-C1-mediated phosphorylation of Ser-334. Serine/threonine-protein kinase involved in memory formation. Together with the cAMP-dependent protein kinase A Pka-C1, promotes long-term memory (LTM) by regulating CrebB stability and activity. Involved in the maintenance of anesthesia-sensitive memory (ASM) which includes short-term memory (STM) and middle-term memory (MTM). This chain is Serine/threonine-protein kinase meng-po, found in Drosophila melanogaster (Fruit fly).